We begin with the raw amino-acid sequence, 433 residues long: E1B 55 kDa protein (433 aa).

It belongs to the adenoviridae E1B 55 kDa protein family. Interacts with host PML-4 and PML-5; this interaction promotes efficient subnuclear targeting of E1B-55K to PML nuclear bodies. Interacts with E4-ORF3 protein. Interacts with E4-ORF6 protein.

The protein resides in the host nucleus. It localises to the host cytoplasm. Functionally, plays a major role to prevent cellular inhibition of viral genome replication. Assembles an SCF-like E3 ubiquitin ligase complex based on the cellular proteins ELOB, ELOC, CUL5 and RBX1, in cooperation with viral E4orf6. This viral RING-type ligase ubiquitinates cellular substrates and targets them to proteasomal degradation: TP53/p53, LIG4, MRE11-RAD50-NBS1 (MRN) complex, ITGA3, DAXX and BLM. E1B-55K probably acts as the substrate-specific adapter of the SCF-like E3 ubiquitin ligase complex. Degradation of host TP53/p53 activity is essential for preventing E1A-induced TP53 accumulation that would otherwise lead to cell apoptosis and growth arrest. E1B-55K also inactivates TP53 transcription-factor activity by binding its transactivation domain. E1B-55K also functions as a SUMO1 E3 ligase for TP53 which causes the latter to be sequestered in promyelocytic leukemia (PML) nuclear bodies thereby contributing to maximal inhibition of TP53 function. This chain is E1B 55 kDa protein, found in Murine adenovirus A serotype 1 (MAdV-1).